Consider the following 178-residue polypeptide: MEKSGGRIVMDEIRSFEKAHLFDLGHPLLNRIADSFVKAAGVGALQAVSREAYFTVVDGAGFDSNNVGPPSEITGNKKHRFPNLRGESSKSLDALVKNTGKESLQWGLAAGLYSGITYGMTEVRGGAHDWRNSAVAGALTGAAMAMTTSERTSHEQVVQSALTGAAISTAANLLSSVF.

The segment at 1-102 (MEKSGGRIVM…DALVKNTGKE (102 aa)) is contains beta strands. The chain crosses the membrane as a helical span at residues 103-119 (SLQWGLAAGLYSGITYG).

The protein belongs to the Tim17/Tim22/Tim23 family. Plastid outer envelope porin OEP16 (TC 1.B.30) subfamily. In terms of assembly, homodimer and oligomers in membrane. Detected in pollen and seeds. Present in leaves and cotyledons.

It localises to the plastid. It is found in the chloroplast outer membrane. Its function is as follows. Voltage-dependent high-conductance channel with a slight cation-selectivity; selective for amino acids but excludes triosephosphates or uncharged sugars. Non-essential amino acid-selective channel protein and translocation pore for NADPH:protochlorophyllide oxidoreductase A (PORA) and possibly PORB. This Arabidopsis thaliana (Mouse-ear cress) protein is Outer envelope pore protein 16-2, chloroplastic (OEP162).